Consider the following 414-residue polypeptide: Tryptophan synthase beta chain (414 aa).

The segment covering 1 to 12 has biased composition (basic and acidic residues); the sequence is MVSTISRHDQNK. The tract at residues 1–23 is disordered; the sequence is MVSTISRHDQNKNNDYLNQPSKE. Position 109 is an N6-(pyridoxal phosphate)lysine (Lys-109).

The protein belongs to the TrpB family. Tetramer of two alpha and two beta chains. It depends on pyridoxal 5'-phosphate as a cofactor.

It carries out the reaction (1S,2R)-1-C-(indol-3-yl)glycerol 3-phosphate + L-serine = D-glyceraldehyde 3-phosphate + L-tryptophan + H2O. It participates in amino-acid biosynthesis; L-tryptophan biosynthesis; L-tryptophan from chorismate: step 5/5. The beta subunit is responsible for the synthesis of L-tryptophan from indole and L-serine. The chain is Tryptophan synthase beta chain from Prochlorococcus marinus (strain MIT 9515).